Reading from the N-terminus, the 238-residue chain is GATA transcription factor 7 (238 aa).

A disordered region spans residues 24–64 (TSLESSSSQRKEDEQEREKFKSFSDQSTRLSPPEDLLSFPG). Residues 32 to 45 (QRKEDEQEREKFKS) show a composition bias toward basic and acidic residues. Residues 112 to 119 (KPRSKRRR) carry the Nuclear localization signal motif. The segment at 160 to 214 (QQLRRCCSHCGVQKTPQWRMGPLGAKTLCNACGVRFKSGRLLPEYRPACSPTFTN) adopts a GATA-type zinc-finger fold.

The protein belongs to the type IV zinc-finger family. Class A subfamily.

The protein localises to the nucleus. Transcriptional activator that specifically binds 5'-GATA-3' or 5'-GAT-3' motifs within gene promoters. May be involved in the regulation of some light-responsive genes. This Arabidopsis thaliana (Mouse-ear cress) protein is GATA transcription factor 7 (GATA7).